A 513-amino-acid polypeptide reads, in one-letter code: Maturase K (513 aa).

Belongs to the intron maturase 2 family. MatK subfamily.

The protein localises to the plastid. Its subcellular location is the chloroplast. Functionally, usually encoded in the trnK tRNA gene intron. Probably assists in splicing its own and other chloroplast group II introns. This is Maturase K from Eleusine indica (Goosegrass).